Consider the following 495-residue polypeptide: Probable biotin-dependent acyl-coenzyme A carboxylase beta3 subunit (495 aa).

A CoA carboxyltransferase N-terminal domain is found at 1–236 (MSRITTDQLR…PLPAPQTPAP (236 aa)). The CoA carboxyltransferase C-terminal domain maps to 242–470 (TWDSVVASRR…SNAIAAEVHA (229 aa)).

This sequence belongs to the AccD/PCCB family. The biotin-dependent acyl-CoA carboxylase complex is composed of an AccA protein, which contains the biotin carboxylase (BC) and biotin carboxyl carrier protein (BCCP) domains, and an AccD protein, which contains the carboxyl transferase (CT) domain.

Component of a biotin-dependent acyl-CoA carboxylase complex. This subunit transfers the CO2 from carboxybiotin to the CoA ester substrate. In Mycobacterium bovis (strain ATCC BAA-935 / AF2122/97), this protein is Probable biotin-dependent acyl-coenzyme A carboxylase beta3 subunit (accD3).